The sequence spans 410 residues: Extracellular serine proteinase (410 aa).

The first 19 residues, 1–19, serve as a signal peptide directing secretion; the sequence is MKRGGLWLLLGLLVLSACS. The propeptide occupies 20-132; it reads SNPPAASTQE…IEADQEVRAF (113 aa). One can recognise an Inhibitor I9 domain in the interval 45–130; it reads YIVVYKENAD…AYIEADQEVR (86 aa). The 272-residue stretch at 139–410 folds into the Peptidase S8 domain; that stretch reads TWGLDRIDQR…SPNLLLYTPF (272 aa). Active-site charge relay system residues include Asp171, His204, and Ser356.

It belongs to the peptidase S8 family. Contains 4 Cys residues that form two disulfide bonds. Post-translationally, glycosylated. This proteinase has a 0.7% carbohydrate content.

The protein resides in the secreted. Functionally, serine proteinase with preferred activity for amino acids with aromatic side groups at the P1' side of the scissible bond. This Thermus sp. (strain Rt41A) protein is Extracellular serine proteinase.